We begin with the raw amino-acid sequence, 145 residues long: Peptide methionine sulfoxide reductase MsrB (145 aa).

One can recognise a MsrB domain in the interval 4–127; that stretch reads SDELKQRIGD…NSAALKFIPY (124 aa). Cysteine 116 (nucleophile) is an active-site residue.

Belongs to the MsrB Met sulfoxide reductase family.

It catalyses the reaction L-methionyl-[protein] + [thioredoxin]-disulfide + H2O = L-methionyl-(R)-S-oxide-[protein] + [thioredoxin]-dithiol. This Streptococcus pyogenes serotype M1 protein is Peptide methionine sulfoxide reductase MsrB.